The primary structure comprises 384 residues: DNA replication and repair protein RecF (384 aa).

ATP is bound at residue 43–50 (GENGSGKT).

The protein belongs to the RecF family.

Its subcellular location is the cytoplasm. Its function is as follows. The RecF protein is involved in DNA metabolism; it is required for DNA replication and normal SOS inducibility. RecF binds preferentially to single-stranded, linear DNA. It also seems to bind ATP. This Brucella suis biovar 1 (strain 1330) protein is DNA replication and repair protein RecF.